A 290-amino-acid polypeptide reads, in one-letter code: NAD kinase (290 aa).

Aspartate 72 serves as the catalytic Proton acceptor. Residues 72–73, lysine 77, 145–146, aspartate 175, 186–191, and alanine 210 each bind NAD(+); these read DG, NE, and TAYSLS.

The protein belongs to the NAD kinase family. A divalent metal cation serves as cofactor.

The protein localises to the cytoplasm. The catalysed reaction is NAD(+) + ATP = ADP + NADP(+) + H(+). Functionally, involved in the regulation of the intracellular balance of NAD and NADP, and is a key enzyme in the biosynthesis of NADP. Catalyzes specifically the phosphorylation on 2'-hydroxyl of the adenosine moiety of NAD to yield NADP. The polypeptide is NAD kinase (Bacteroides fragilis (strain ATCC 25285 / DSM 2151 / CCUG 4856 / JCM 11019 / LMG 10263 / NCTC 9343 / Onslow / VPI 2553 / EN-2)).